A 287-amino-acid polypeptide reads, in one-letter code: Pyridoxal kinase PdxY (287 aa).

Residues Ser-10 and 45 to 46 (TQ) contribute to the substrate site. ATP contacts are provided by residues Asp-112, Ala-144, Glu-149, Lys-182, and 209–212 (RPLV). Asp-224 contributes to the substrate binding site.

Belongs to the pyridoxine kinase family. PdxY subfamily. In terms of assembly, homodimer. Mg(2+) is required as a cofactor.

It carries out the reaction pyridoxal + ATP = pyridoxal 5'-phosphate + ADP + H(+). It functions in the pathway cofactor metabolism; pyridoxal 5'-phosphate salvage; pyridoxal 5'-phosphate from pyridoxal: step 1/1. Pyridoxal kinase involved in the salvage pathway of pyridoxal 5'-phosphate (PLP). Catalyzes the phosphorylation of pyridoxal to PLP. In Shigella flexneri, this protein is Pyridoxal kinase PdxY.